The primary structure comprises 118 residues: MSAQAKPRSEMTAEELAAKEDEEFNVGPLSILTNSVKNNHQVLINCRNNKKLLGRVKAFDRHCNMVLENVKEMWTEVPKTGKGKKKAKSVAKDRFISKMFLRGDSVILVVKNPLAQAE.

In terms of domain architecture, Sm spans 29–115 (LSILTNSVKN…VILVVKNPLA (87 aa)).

The protein belongs to the snRNP core protein family.

The protein localises to the nucleus. Its subcellular location is the cytoplasm. It is found in the cytosol. Functionally, plays a role in pre-mRNA splicing as a core component of the spliceosomal U1, U2, U4 and U5 small nuclear ribonucleoproteins (snRNPs), the building blocks of the spliceosome. This chain is Probable small nuclear ribonucleoprotein Sm D2 (snr-4), found in Caenorhabditis elegans.